A 1876-amino-acid polypeptide reads, in one-letter code: Phenolphthiocerol/phthiocerol polyketide synthase subunit A (1876 aa).

Residues 9–83 enclose the Carrier 1 domain; it reads ADLRHWLIDY…ALAAYLAAPE (75 aa). An O-(pantetheine 4'-phosphoryl)serine modification is found at Ser43. Positions 101–526 constitute a Ketosynthase family 3 (KS3) domain; sequence DEPIAVVGMG…GTNAHVVIEQ (426 aa). Catalysis depends on for beta-ketoacyl synthase activity residues Cys273, His408, and His448. Residues 626–950 form an acyltransferase region; it reads SPGPGTVFVY…NLNKAHTIHP (325 aa). Ser720 serves as the catalytic For malonyltransferase activity. The interval 997 to 1112 is N-terminal hotdog fold; that stretch reads HTTVATVSAS…AQLSSSPSDS (116 aa). In terms of domain architecture, PKS/mFAS DH spans 997-1267; sequence HTTVATVSAS…YRALDFGLDV (271 aa). His1027 functions as the Proton acceptor; for dehydratase activity in the catalytic mechanism. Positions 1102 to 1130 are disordered; sequence TAQLSSSPSDSASSLNEHHRANGQPPERA. Residues 1106-1115 are compositionally biased toward low complexity; it reads SSSPSDSASS. Residues 1130–1267 form a C-terminal hotdog fold region; that stretch reads AHRDLIPDLA…YRALDFGLDV (138 aa). The active-site Proton donor; for dehydratase activity is the Asp1186. 1491–1551 contacts NADP(+); the sequence is AAYLITGGLG…RRRIDAIRAL (61 aa). Residues 1491-1728 are beta-ketoacyl reductase; the sequence is AAYLITGGLG…DGYDVAQAVV (238 aa). The Carrier 2 domain maps to 1759–1836; that stretch reads EVRSELEQGL…SLASYLAKRV (78 aa). Ser1796 bears the O-(pantetheine 4'-phosphoryl)serine mark.

Requires NADP(+) as cofactor. The cofactor is pantetheine 4'-phosphate.

It catalyses the reaction icosanoyl-[(phenol)carboxyphthiodiolenone synthase] + 2 (S)-methylmalonyl-CoA + 3 malonyl-CoA + 5 NADPH + 10 H(+) = C32-carboxyphthiodiolenone-[(phenol)carboxyphthiodiolenone synthase] + 5 CO2 + 5 NADP(+) + 5 CoA + 2 H2O. The enzyme catalyses docosanoyl-[(phenol)carboxyphthiodiolenone synthase] + 2 (S)-methylmalonyl-CoA + 3 malonyl-CoA + 5 NADPH + 10 H(+) = C34-carboxyphthiodiolenone-[(phenol)carboxyphthiodiolenone synthase] + 5 CO2 + 5 NADP(+) + 5 CoA + 2 H2O. It carries out the reaction 17-(4-hydroxyphenyl)heptadecanoyl-[(phenol)carboxyphthiodiolenone synthase] + 2 (S)-methylmalonyl-CoA + 3 malonyl-CoA + 5 NADPH + 10 H(+) = C35-(phenol)carboxyphthiodiolenone-[(phenol)carboxyphthiodiolenone synthase] + 5 CO2 + 5 NADP(+) + 5 CoA + 2 H2O. The catalysed reaction is 19-(4-hydroxyphenyl)nonadecanoyl-[(phenol)carboxyphthiodiolenone synthase] + 2 (S)-methylmalonyl-CoA + 3 malonyl-CoA + 5 NADPH + 10 H(+) = C37-(phenol)carboxyphthiodiolenone-[(phenol)carboxyphthiodiolenone synthase] + 5 CO2 + 5 NADP(+) + 5 CoA + 2 H2O. Its pathway is lipid metabolism; fatty acid biosynthesis. Its function is as follows. Part of the PpsABCDE complex involved in the biosynthesis of the lipid core common to phthiocerols and phenolphthiocerols by successive additions of malonyl-CoA or methylmalonyl-CoA extender units. PpsA can accept as substrate the activated forms of either icosanoyl (C20), docosanoyl (C22) or lignoceroyl (C24) groups from FadD26, or a (4-hydroxyphenyl)-C17 or (4-hydroxyphenyl)-C19 fatty acyl from FadD29. PpsA initiates the biosynthesis and extends its substrate using a malonyl-CoA extender unit. The PpsB and PpsC proteins add the second and third malonyl-CoA extender units. PpsD adds an (R)-methylmalonyl unit and PpsE adds a second (R)-methylmalonyl unit. The incorporation of the methylmalonyl units results in formation of two branched methyl groups in the elongated product. The protein is Phenolphthiocerol/phthiocerol polyketide synthase subunit A (ppsA) of Mycobacterium tuberculosis (strain CDC 1551 / Oshkosh).